The primary structure comprises 230 residues: 2-C-methyl-D-erythritol 4-phosphate cytidylyltransferase (230 aa).

The protein belongs to the IspD/TarI cytidylyltransferase family. IspD subfamily.

The catalysed reaction is 2-C-methyl-D-erythritol 4-phosphate + CTP + H(+) = 4-CDP-2-C-methyl-D-erythritol + diphosphate. It participates in isoprenoid biosynthesis; isopentenyl diphosphate biosynthesis via DXP pathway; isopentenyl diphosphate from 1-deoxy-D-xylulose 5-phosphate: step 2/6. Functionally, catalyzes the formation of 4-diphosphocytidyl-2-C-methyl-D-erythritol from CTP and 2-C-methyl-D-erythritol 4-phosphate (MEP). The protein is 2-C-methyl-D-erythritol 4-phosphate cytidylyltransferase of Laribacter hongkongensis (strain HLHK9).